We begin with the raw amino-acid sequence, 441 residues long: UDP-N-acetylmuramoylalanine--D-glutamate ligase (441 aa).

Residue 112-118 (GTNGKTT) participates in ATP binding.

It belongs to the MurCDEF family.

It localises to the cytoplasm. It carries out the reaction UDP-N-acetyl-alpha-D-muramoyl-L-alanine + D-glutamate + ATP = UDP-N-acetyl-alpha-D-muramoyl-L-alanyl-D-glutamate + ADP + phosphate + H(+). Its pathway is cell wall biogenesis; peptidoglycan biosynthesis. Cell wall formation. Catalyzes the addition of glutamate to the nucleotide precursor UDP-N-acetylmuramoyl-L-alanine (UMA). The sequence is that of UDP-N-acetylmuramoylalanine--D-glutamate ligase from Gloeobacter violaceus (strain ATCC 29082 / PCC 7421).